We begin with the raw amino-acid sequence, 1890 residues long: DNA polymerase zeta catalytic subunit (1890 aa).

Polar residues-rich tracts occupy residues 508 to 533 and 549 to 560; these read QENL…NLRT and PDSSTSNGASEN. Disordered regions lie at residues 508-565 and 922-942; these read QENL…FRRY and GDSN…DRGA. Basic and acidic residues predominate over residues 922 to 940; that stretch reads GDSNIDSEKQPLRDNHNDR. 4 residues coordinate Zn(2+): cysteine 1789, cysteine 1792, cysteine 1803, and cysteine 1806. A CysA-type zinc finger spans residues 1789-1806; sequence CILCGEVVQESAQLCNRC. The [4Fe-4S] cluster site is built by cysteine 1835, cysteine 1838, cysteine 1851, and cysteine 1856. The CysB motif motif lies at 1835 to 1856; the sequence is CRHCGGGDWVVQSGVKCNSLAC.

Belongs to the DNA polymerase type-B family. Forms DNA polymerase zeta with REV7. The cofactor is [4Fe-4S] cluster. In terms of tissue distribution, expressed in roots, leaves and flowers.

It is found in the nucleus. It carries out the reaction DNA(n) + a 2'-deoxyribonucleoside 5'-triphosphate = DNA(n+1) + diphosphate. Catalytic subunit of the error prone DNA polymerase zeta. Involved in damage-tolerance mechanisms through translesion DNA synthesis. The chain is DNA polymerase zeta catalytic subunit (REV3) from Arabidopsis thaliana (Mouse-ear cress).